Reading from the N-terminus, the 457-residue chain is Argininosuccinate lyase (457 aa).

The protein belongs to the lyase 1 family. Argininosuccinate lyase subfamily.

It localises to the cytoplasm. It carries out the reaction 2-(N(omega)-L-arginino)succinate = fumarate + L-arginine. The protein operates within amino-acid biosynthesis; L-arginine biosynthesis; L-arginine from L-ornithine and carbamoyl phosphate: step 3/3. The protein is Argininosuccinate lyase of Psychrobacter cryohalolentis (strain ATCC BAA-1226 / DSM 17306 / VKM B-2378 / K5).